The sequence spans 588 residues: Vesicular glutamate transporter 3 (588 aa).

At 1–76 the chain is on the cytoplasmic side; that stretch reads MPFNAFDTFK…CSCCGIPKRY (76 aa). Residues 77–97 form a helical membrane-spanning segment; it reads IIAVMSGLGFCISFGIRCNLG. The Vesicular segment spans residues 98 to 130; sequence VAIVEMVNNSTVYVDGKPEIQTAQFNWDPETVG. N-linked (GlcNAc...) asparagine glycosylation occurs at N106. The chain crosses the membrane as a helical span at residues 131 to 151; that stretch reads LIHGSFFWGYIVTQIPGGFIS. The Cytoplasmic portion of the chain corresponds to 152 to 153; sequence NK. A helical membrane pass occupies residues 154–174; it reads FAANRVFGAAIFLTSTLNMFI. At 175 to 182 the chain is on the vesicular side; the sequence is PSAARVHY. Residues 183–203 form a helical membrane-spanning segment; sequence GCVMCVRILQGLVEGVTYPAC. Topologically, residues 204–221 are cytoplasmic; it reads HGMWSKWAPPLERSRLAT. The chain crosses the membrane as a helical span at residues 222 to 242; that stretch reads TSFCGSYAGAVVAMPLAGVLV. Residues 243-249 lie on the Vesicular side of the membrane; sequence QYIGWAS. The chain crosses the membrane as a helical span at residues 250-270; it reads VFYIYGMFGIIWYMFWLLQAY. The Cytoplasmic portion of the chain corresponds to 271–314; sequence ECPAVHPTISNEERTYIETSIGEGANLASLSKFNTPWRRFFTSL. Residues 315–335 form a helical membrane-spanning segment; sequence PVYAIIVANFCRSWTFYLLLI. Topologically, residues 336-353 are vesicular; sequence SQPAYFEEVFGFAISKVG. The chain crosses the membrane as a helical span at residues 354-374; that stretch reads LLSAVPHMVMTIVVPIGGQLA. Topologically, residues 375 to 390 are cytoplasmic; sequence DYLRSRKILTTTAVRK. The chain crosses the membrane as a helical span at residues 391 to 411; it reads IMNCGGFGMEATLLLVVGFSH. Residues 412 to 413 are Vesicular-facing; it reads TK. Residues 414 to 434 form a helical membrane-spanning segment; sequence GVAISFLVLAVGFSGFAISGF. Topologically, residues 435–447 are cytoplasmic; that stretch reads NVNHLDIAPRYAS. A helical transmembrane segment spans residues 448–468; the sequence is ILMGISNGVGTLSGMVCPLIV. The Vesicular segment spans residues 469 to 481; that stretch reads GAMTKHKTREEWQ. The helical transmembrane segment at 482 to 502 threads the bilayer; that stretch reads NVFLIAALVHYSGVIFYGVFA. The Cytoplasmic portion of the chain corresponds to 503 to 585; sequence SGEKQDWADP…LSYQNEEDFS (83 aa). The interval 539-588 is disordered; sequence FVSPRKKMSYGATTQNCEVQKTDRRQQRESAFEGEEPLSYQNEEDFSETS. Positions 558–569 are enriched in basic and acidic residues; it reads QKTDRRQQRESA. Positions 570–588 are enriched in acidic residues; the sequence is FEGEEPLSYQNEEDFSETS.

It belongs to the major facilitator superfamily. Sodium/anion cotransporter family. VGLUT subfamily. In terms of tissue distribution, expressed in brain, kidney and liver. Expressed within the amygdala, brainstem, cerberal cortex, dorsal root ganglia, dorsal spinal cord, hippocampus, hypothalamus, retina, striatum and ventral spinal cord. Expressed within neurons of the caudate-putamen, olfactory tubercle, nucleus accumbens, hippocampus, interpeduncular nucleus and dorsal and medial raphe nuclei. Expressed in inner hair cells of the ear. Expressed at synaptic terminals within the lateral superior olive (LSO), a nucleus of the mammalian sound localization system, and in the medial nucleus of the trapezoid body (MNTB), which provides inhibitory input to the LSO.

It is found in the cytoplasmic vesicle. It localises to the secretory vesicle. The protein resides in the synaptic vesicle membrane. Its subcellular location is the cell membrane. The protein localises to the synapse. It is found in the synaptosome. It catalyses the reaction L-glutamate(out) = L-glutamate(in). The enzyme catalyses chloride(in) = chloride(out). The catalysed reaction is 3 Na(+)(out) + phosphate(out) = 3 Na(+)(in) + phosphate(in). The L-glutamate uniporter activity exhibits a biphasic dependence on chloride concentration. Chloride channel activity is allosterically activated by lumenal H(+) and Cl(-) leading to synaptic vesicles acidification. The glutamate transport activity is allosterically activated by lumenal H(+) and Cl(-), preventing non-vesicular L-glutamate release. Functionally, multifunctional transporter that transports L-glutamate as well as multiple ions such as chloride, sodium and phosphate. At the synaptic vesicle membrane, mainly functions as an uniporter that mediates the uptake of L-glutamate into synaptic vesicles at presynaptic nerve terminals of excitatory neural cells. The L-glutamate uniporter activity is electrogenic and is driven by the proton electrochemical gradient, mainly by the electrical gradient established by the vacuolar H(+)-ATPase across the synaptic vesicle membrane. In addition, functions as a chloride channel that allows a chloride permeation through the synaptic vesicle membrane that affects the proton electrochemical gradient and promotes synaptic vesicles acidification. At the plasma membrane, following exocytosis, functions as a symporter of Na(+) and phosphate from the extracellular space to the cytoplasm allowing synaptic phosphate homeostasis regulation. The symporter activity is electrogenic. Moreover, operates synergistically with SLC18A3/VACHT under a constant H(+) gradient, thereby allowing striatal vesicular acetylcholine uptake. The sequence is that of Vesicular glutamate transporter 3 from Rattus norvegicus (Rat).